We begin with the raw amino-acid sequence, 285 residues long: 3-methyl-2-oxobutanoate hydroxymethyltransferase (285 aa).

Residues 1–22 form a disordered region; that stretch reads MSEHNVYGAAQPAQPGQPAQPR. Low complexity predominate over residues 8 to 21; the sequence is GAAQPAQPGQPAQP. The Mg(2+) site is built by D66 and D105. 3-methyl-2-oxobutanoate contacts are provided by residues 66 to 67, D105, and K135; that span reads DS. E137 lines the Mg(2+) pocket. E203 serves as the catalytic Proton acceptor.

Belongs to the PanB family. As to quaternary structure, homodecamer; pentamer of dimers. The cofactor is Mg(2+).

The protein localises to the cytoplasm. The catalysed reaction is 3-methyl-2-oxobutanoate + (6R)-5,10-methylene-5,6,7,8-tetrahydrofolate + H2O = 2-dehydropantoate + (6S)-5,6,7,8-tetrahydrofolate. The protein operates within cofactor biosynthesis; (R)-pantothenate biosynthesis; (R)-pantoate from 3-methyl-2-oxobutanoate: step 1/2. Its function is as follows. Catalyzes the reversible reaction in which hydroxymethyl group from 5,10-methylenetetrahydrofolate is transferred onto alpha-ketoisovalerate to form ketopantoate. This is 3-methyl-2-oxobutanoate hydroxymethyltransferase from Mycolicibacterium paratuberculosis (strain ATCC BAA-968 / K-10) (Mycobacterium paratuberculosis).